We begin with the raw amino-acid sequence, 303 residues long: DDRGK domain-containing protein 1 (303 aa).

Residues 1–2 lie on the Lumenal side of the membrane; the sequence is MD. A helical transmembrane segment spans residues 3-23; sequence LILLIGIATALLIILLTLYFL. At 24–303 the chain is on the cytoplasmic side; the sequence is QKRNAPAETK…TPVTASEGGA (280 aa). Disordered regions lie at residues 31 to 53 and 84 to 160; these read ETKA…VPRR and AIDP…AEVE. Over residues 106–160 the composition is skewed to basic and acidic residues; the sequence is LDEKMGAKKRAKMEAKEQKRLQREQELHDREQRKVKEAKEEAERKQQDDLDAEVE.

Belongs to the DDRGK1 family. As to quaternary structure, interacts with Atg9; the interaction is transient.

The protein resides in the endoplasmic reticulum membrane. Substrate adapter for ufmylation, the covalent attachment of the ubiquitin-like modifier UFM1 to substrate proteins. Required for ufmylation of Atg9; protects the nervous system during aging, possibly by stabilizing Atg9 and supporting its function. The polypeptide is DDRGK domain-containing protein 1 (Drosophila grimshawi (Hawaiian fruit fly)).